The sequence spans 65 residues: Large ribosomal subunit protein bL35 (65 aa).

Over residues 1-15 the composition is skewed to basic residues; sequence MPKLKTRKAAAKRFR. Residues 1–28 are disordered; the sequence is MPKLKTRKAAAKRFRQTGTGKFTRRKAN.

Belongs to the bacterial ribosomal protein bL35 family.

The sequence is that of Large ribosomal subunit protein bL35 from Cyanothece sp. (strain PCC 7425 / ATCC 29141).